Here is a 1466-residue protein sequence, read N- to C-terminus: Collagen alpha-1(III) chain (1466 aa).

Positions 1–23 (MMSFVQKGSWLLLALLHPTIILA) are cleaved as a signal peptide. Positions 24-153 (QQEAVEGGCS…CPTGPQNYSP (130 aa)) are cleaved as a propeptide — N-terminal propeptide. Residues 30-89 (GGCSHLGQSYADRDVWKPEPCQICVCDSGSVLCDDIICDDQELDCPNPEIPFGECCAVCP) form the VWFC domain. Positions 95–1194 (PTRPPNGQGP…GPPGPPGAPG (1100 aa)) are disordered. Residues 99–108 (PNGQGPQGPK) are compositionally biased toward low complexity. Residues 146–155 (TGPQNYSPQY) show a composition bias toward polar residues. The nonhelical region (N-terminal) stretch occupies residues 149–167 (QNYSPQYDSYDVKSGVAVG). The triple-helical region stretch occupies residues 168-1196 (GLAGYPGPAG…PGPPGAPGPC (1029 aa)). P173, P179, P182, P185, P191, P194, P197, P203, P206, P215, P218, P236, P239, P245, P248, P257, and P260 each carry 4-hydroxyproline. Pro residues predominate over residues 175–185 (PAGPPGPPGPP). A compositionally biased stretch (low complexity) spans 187–199 (TSGHPGSPGSPGY). Residues 229-241 (KDGESGRPGRPGE) are compositionally biased toward basic and acidic residues. Residues 251–260 (KGPAGIPGFP) are compositionally biased toward low complexity. Position 263 is a 5-hydroxylysine; alternate (K263). A glycan (O-linked (Gal...) hydroxylysine; alternate) is linked at K263. Residues 266 to 277 (RGFDGRNGEKGE) are compositionally biased toward basic and acidic residues. P281 is subject to 4-hydroxyproline. The residue at position 284 (K284) is a 5-hydroxylysine. A 4-hydroxyproline mark is found at P290, P296, P305, P311, P314, P332, P335, P338, P344, P347, P359, P365, P371, P383, P386, P392, P404, P407, P416, P425, P434, P443, P455, P458, P470, P473, P479, P488, P500, P512, P524, P530, P533, P539, P542, P545, P551, P554, P563, P566, P575, P581, P590, P599, P602, P608, P620, P635, P644, P650, P656, P659, P661, P668, P671, P680, P686, P692, P701, P703, P713, P716, P722, P728, P737, P746, P749, P755, P770, P776, P785, P788, P797, P806, P812, P815, P821, P830, P839, P845, and P854. The segment covering 311–322 (PGLPGAAGARGN) has biased composition (low complexity). Residues 355–380 (PAGSPGSNGAPGQRGEPGPQGHAGAQ) are compositionally biased toward low complexity. Residues 390 to 399 (GSPGGKGEMG) show a composition bias toward gly residues. Over residues 404 to 425 (PGAPGLMGARGPPGPAGANGAP) the composition is skewed to low complexity. A compositionally biased stretch (gly residues) spans 426-435 (GLRGGAGEPG). Residues 478 to 523 (LPGAAGERGAPGFRGPAGPNGIPGEKGPAGERGAPGPAGPRGAAGE) are compositionally biased toward low complexity. The segment covering 528 to 549 (GVPGGPGMRGMPGSPGGPGSDG) has biased composition (gly residues). The span at 642–651 (GLPGTGGPPG) shows a compositional bias: gly residues. Residues 669 to 678 (GAPGGKGDAG) are compositionally biased toward gly residues. Residues 679-692 (APGERGPPGLAGAP) are compositionally biased toward low complexity. The segment covering 693–711 (GLRGGAGPPGPEGGKGAAG) has biased composition (gly residues). Residues 729–738 (GERGGLGSPG) show a composition bias toward gly residues. Positions 787–796 (LPGIAGPRGS) are enriched in low complexity. Basic and acidic residues predominate over residues 823 to 835 (GKGERGAPGEKGE). The span at 836–850 (GGPPGVAGPPGGSGP) shows a compositional bias: gly residues. K860 is subject to 5-hydroxylysine. Positions 864 to 873 (GSPGGPGAAG) are enriched in gly residues. A 4-hydroxyproline mark is found at P866, P869, P875, P881, P884, P890, P892, P899, P905, P914, P917, P929, P935, P941, and P944. Positions 890-907 (PGPPGPSGSPGKDGPPGP) are enriched in pro residues. Low complexity predominate over residues 908-917 (AGNTGAPGSP). Positions 946–961 (PLGIAGITGARGLAGP) are enriched in low complexity. A 4-hydroxyproline mark is found at P962, P965, and P971. The residue at position 977 (K977) is a 5-hydroxylysine. P983, P995, P1001, P1010, P1016, P1022, P1028, P1040, P1043, P1046, P1049, P1052, P1076, and P1085 each carry 4-hydroxyproline. A compositionally biased stretch (pro residues) spans 1046-1055 (PGHPGPPGPV). Positions 1067–1085 (SGPAGPAGAPGPAGSRGAP) are enriched in low complexity. K1106 bears the 5-hydroxylysine mark. P1112, P1115, P1118, P1121, P1133, P1148, P1157, P1163, P1178, P1181, P1184, P1187, P1190, and P1193 each carry 4-hydroxyproline. Residues 1123 to 1133 (PAGQQGAIGSP) are compositionally biased toward low complexity. Residues 1181–1193 (PGQPGPPGPPGAP) are compositionally biased toward pro residues. Residues 1197-1205 (CGGVGAAAI) form a nonhelical region (C-terminal) region. The propeptide at 1222–1466 (DEPMDFKINT…GVDVGPVCFL (245 aa)) is C-terminal propeptide. Residues 1232–1466 (DEIMTSLKSV…GVDVGPVCFL (235 aa)) enclose the Fibrillar collagen NC1 domain. Cystine bridges form between C1262–C1294, C1302–C1464, and C1372–C1417. The Ca(2+) site is built by D1280, N1282, Q1283, C1285, and D1288.

The protein belongs to the fibrillar collagen family. As to quaternary structure, trimers of identical alpha 1(III) chains. The chains are linked to each other by interchain disulfide bonds. Trimers are also cross-linked via hydroxylysines. Interacts with ADGRG1. Proline residues at the third position of the tripeptide repeating unit (G-X-Y) are hydroxylated in some or all of the chains. Post-translationally, O-linked glycan consists of a Glc-Gal disaccharide bound to the oxygen atom of a post-translationally added hydroxyl group.

The protein resides in the secreted. The protein localises to the extracellular space. It is found in the extracellular matrix. Functionally, collagen type III occurs in most soft connective tissues along with type I collagen. Involved in regulation of cortical development. Is the major ligand of ADGRG1 in the developing brain and binding to ADGRG1 inhibits neuronal migration and activates the RhoA pathway by coupling ADGRG1 to GNA13 and possibly GNA12. The protein is Collagen alpha-1(III) chain (COL3A1) of Homo sapiens (Human).